Consider the following 364-residue polypeptide: UDP-3-O-acylglucosamine N-acyltransferase (364 aa).

The active-site Proton acceptor is the His-258.

It belongs to the transferase hexapeptide repeat family. LpxD subfamily. In terms of assembly, homotrimer.

The enzyme catalyses a UDP-3-O-[(3R)-3-hydroxyacyl]-alpha-D-glucosamine + a (3R)-hydroxyacyl-[ACP] = a UDP-2-N,3-O-bis[(3R)-3-hydroxyacyl]-alpha-D-glucosamine + holo-[ACP] + H(+). The protein operates within bacterial outer membrane biogenesis; LPS lipid A biosynthesis. In terms of biological role, catalyzes the N-acylation of UDP-3-O-acylglucosamine using 3-hydroxyacyl-ACP as the acyl donor. Is involved in the biosynthesis of lipid A, a phosphorylated glycolipid that anchors the lipopolysaccharide to the outer membrane of the cell. The polypeptide is UDP-3-O-acylglucosamine N-acyltransferase (Burkholderia orbicola (strain AU 1054)).